Reading from the N-terminus, the 566-residue chain is Putative lipase ATG15 (566 aa).

Residues Met-1–Ser-17 are Cytoplasmic-facing. The helical; Signal-anchor for type II membrane protein transmembrane segment at Phe-18–Phe-38 threads the bilayer. Residues Pro-39–Ala-566 lie on the Lumenal side of the membrane. N-linked (GlcNAc...) asparagine glycans are attached at residues Asn-264 and Asn-348. Ser-366 serves as the catalytic Charge relay system. N-linked (GlcNAc...) asparagine glycosylation is present at Asn-483. The segment at Asp-507 to Pro-545 is disordered. A compositionally biased stretch (low complexity) spans Gly-522 to Ser-543.

It belongs to the AB hydrolase superfamily. Lipase family. Binds to both phosphatidylinositol (PI) and phosphatidylinositol 3,5-bisphosphate (PIP2).

It is found in the endosome. It localises to the multivesicular body membrane. Its subcellular location is the prevacuolar compartment membrane. The enzyme catalyses a triacylglycerol + H2O = a diacylglycerol + a fatty acid + H(+). Functionally, lipase which is essential for lysis of subvacuolar cytoplasm to vacuole targeted bodies and intravacuolar autophagic bodies. Involved in the lysis of intravacuolar multivesicular body (MVB) vesicles. The intravacuolar membrane disintegration by ATG15 is critical to life span extension. This chain is Putative lipase ATG15 (ATG15), found in Meyerozyma guilliermondii (strain ATCC 6260 / CBS 566 / DSM 6381 / JCM 1539 / NBRC 10279 / NRRL Y-324) (Yeast).